A 542-amino-acid polypeptide reads, in one-letter code: Chondroitin sulfate N-acetylgalactosaminyltransferase 2 (542 aa).

Topologically, residues 1–11 (MPRRGLILHTR) are cytoplasmic. The chain crosses the membrane as a helical; Signal-anchor for type II membrane protein span at residues 12–32 (THWLLLGLALLCSLVLFMYLL). Over 33–542 (ECAPQTDGNA…AYRTNSEAVG (510 aa)) the chain is Lumenal. The N-linked (GlcNAc...) asparagine glycan is linked to Asn41. The stretch at 59-105 (ALLQEQEEHYQTRATSLKRQIAQLKQELQEMSEKMRSLQERRNVGAN) forms a coiled coil. The N-linked (GlcNAc...) asparagine glycan is linked to Asn333. The a divalent metal cation site is built by Asp369 and His486.

Belongs to the chondroitin N-acetylgalactosaminyltransferase family. As to expression, ubiquitous.

It is found in the golgi apparatus. Its subcellular location is the golgi stack membrane. It carries out the reaction 3-O-(beta-D-GlcA-(1-&gt;3)-beta-D-Gal-(1-&gt;3)-beta-D-Gal-(1-&gt;4)-beta-D-Xyl)-L-seryl-[protein] + UDP-N-acetyl-alpha-D-galactosamine = 3-O-(beta-D-GalNAc-(1-&gt;4)-beta-D-GlcA-(1-&gt;3)-beta-D-Gal-(1-&gt;3)-beta-D-Gal-(1-&gt;4)-beta-D-Xyl)-L-seryl-[protein] + UDP + H(+). Transfers 1,4-N-acetylgalactosamine (GalNAc) from UDP-GalNAc to the non-reducing end of glucuronic acid (GlcUA). Required for addition of the first GalNAc to the core tetrasaccharide linker and for elongation of chondroitin chains. The sequence is that of Chondroitin sulfate N-acetylgalactosaminyltransferase 2 (CSGALNACT2) from Homo sapiens (Human).